The chain runs to 47 residues: Conotoxin reg3.11 (47 aa).

The propeptide occupies 1–31; the sequence is DQPVERHAENKRHLIPAVMRAMTMNADRRVQ. Disulfide bonds link Cys-32–Cys-44, Cys-33–Cys-42, and Cys-38–Cys-45. Residues 46 to 47 constitute a propeptide that is removed on maturation; that stretch reads YH.

Belongs to the conotoxin M superfamily. In terms of tissue distribution, expressed by the venom duct.

It localises to the secreted. The polypeptide is Conotoxin reg3.11 (Conus regius (Crown cone)).